The following is a 54-amino-acid chain: UPF0391 membrane protein R00741 (54 aa).

The next 2 membrane-spanning stretches (helical) occupy residues 5–25 (ALVF…GIAG) and 30–50 (IAQV…VAGL).

It belongs to the UPF0391 family.

It is found in the cell membrane. The polypeptide is UPF0391 membrane protein R00741 (Rhizobium meliloti (strain 1021) (Ensifer meliloti)).